Here is a 433-residue protein sequence, read N- to C-terminus: tRNA-2-methylthio-N(6)-dimethylallyladenosine synthase (433 aa).

One can recognise an MTTase N-terminal domain in the interval lysine 4–phenylalanine 119. 6 residues coordinate [4Fe-4S] cluster: cysteine 13, cysteine 50, cysteine 82, cysteine 151, cysteine 155, and cysteine 158. One can recognise a Radical SAM core domain in the interval arginine 137–glutamate 370. The TRAM domain occupies lysine 373–valine 433.

It belongs to the methylthiotransferase family. MiaB subfamily. In terms of assembly, monomer. [4Fe-4S] cluster is required as a cofactor.

It localises to the cytoplasm. The catalysed reaction is N(6)-dimethylallyladenosine(37) in tRNA + (sulfur carrier)-SH + AH2 + 2 S-adenosyl-L-methionine = 2-methylsulfanyl-N(6)-dimethylallyladenosine(37) in tRNA + (sulfur carrier)-H + 5'-deoxyadenosine + L-methionine + A + S-adenosyl-L-homocysteine + 2 H(+). Functionally, catalyzes the methylthiolation of N6-(dimethylallyl)adenosine (i(6)A), leading to the formation of 2-methylthio-N6-(dimethylallyl)adenosine (ms(2)i(6)A) at position 37 in tRNAs that read codons beginning with uridine. This chain is tRNA-2-methylthio-N(6)-dimethylallyladenosine synthase, found in Campylobacter jejuni (strain RM1221).